The sequence spans 194 residues: Imidazoleglycerol-phosphate dehydratase (194 aa).

The protein belongs to the imidazoleglycerol-phosphate dehydratase family.

The protein resides in the cytoplasm. The enzyme catalyses D-erythro-1-(imidazol-4-yl)glycerol 3-phosphate = 3-(imidazol-4-yl)-2-oxopropyl phosphate + H2O. Its pathway is amino-acid biosynthesis; L-histidine biosynthesis; L-histidine from 5-phospho-alpha-D-ribose 1-diphosphate: step 6/9. The chain is Imidazoleglycerol-phosphate dehydratase from Sulfurisphaera tokodaii (strain DSM 16993 / JCM 10545 / NBRC 100140 / 7) (Sulfolobus tokodaii).